A 504-amino-acid polypeptide reads, in one-letter code: Protein psiD (504 aa).

The N-terminal stretch at 1–21 (MKYSYLLLILLLSNLYKEGFS) is a signal peptide. N-linked (GlcNAc...) asparagine glycosylation is found at Asn-87, Asn-136, Asn-236, Asn-252, Asn-290, and Asn-373. A PA14 domain is found at 111-251 (LTRVGDSTYA…YDACGVCDGH (141 aa)). Over residues 417–430 (TVTPTVTPTVTPTP) the composition is skewed to low complexity. A disordered region spans residues 417 to 453 (TVTPTVTPTVTPTPTTTPTPSPTTVPPRPTPTPLPAD). Pro residues predominate over residues 431–453 (TTTPTPSPTTVPPRPTPTPLPAD). The N-linked (GlcNAc...) asparagine glycan is linked to Asn-483.

The protein belongs to the prespore-cell-inducing factor family.

The protein localises to the secreted. This is Protein psiD (psiD) from Dictyostelium discoideum (Social amoeba).